Consider the following 215-residue polypeptide: MTKLTARQQQVFDLIRRAIERSGFPPTRAEIAAELGFSSPNAAEEHLRALARKGVIELAAGASRGIRLLGIDDAPHQFTLPHAGLMQLSLPLVGRVAAGSPILAQEHISQHYACDPALFTSKPDYLLKVRGLSMRDAGILDGDLLAVQKRTEAKDGQIIVARLGDDVTVKRLMRRPGGLELIAENPDYENIFVKAGSADFALEGIAVGLIRSGEL.

Residues 28-48 constitute a DNA-binding region (H-T-H motif); it reads RAEIAAELGFSSPNAAEEHLR. Active-site for autocatalytic cleavage activity residues include Ser133 and Lys170.

This sequence belongs to the peptidase S24 family. As to quaternary structure, homodimer.

It catalyses the reaction Hydrolysis of Ala-|-Gly bond in repressor LexA.. In terms of biological role, represses a number of genes involved in the response to DNA damage (SOS response), including recA and lexA. In the presence of single-stranded DNA, RecA interacts with LexA causing an autocatalytic cleavage which disrupts the DNA-binding part of LexA, leading to derepression of the SOS regulon and eventually DNA repair. The sequence is that of LexA repressor from Burkholderia cenocepacia (strain HI2424).